The primary structure comprises 157 residues: Endoribonuclease YbeY (157 aa).

Histidine 122, histidine 126, and histidine 132 together coordinate Zn(2+).

The protein belongs to the endoribonuclease YbeY family. Zn(2+) serves as cofactor.

It localises to the cytoplasm. Functionally, single strand-specific metallo-endoribonuclease involved in late-stage 70S ribosome quality control and in maturation of the 3' terminus of the 16S rRNA. This is Endoribonuclease YbeY from Lysinibacillus sphaericus (strain C3-41).